The primary structure comprises 861 residues: Leucine--tRNA ligase (861 aa).

The 'HIGH' region motif lies at 42-52 (PYPSGKLHMGH). Positions 620–624 (KMSKS) match the 'KMSKS' region motif. Position 623 (Lys623) interacts with ATP.

This sequence belongs to the class-I aminoacyl-tRNA synthetase family.

It is found in the cytoplasm. The catalysed reaction is tRNA(Leu) + L-leucine + ATP = L-leucyl-tRNA(Leu) + AMP + diphosphate. The polypeptide is Leucine--tRNA ligase (Hahella chejuensis (strain KCTC 2396)).